Reading from the N-terminus, the 201-residue chain is Aminoglycoside N(6')-acetyltransferase type 1 (201 aa).

The N-acetyltransferase domain maps to 25–192 (VTLRLMTEHD…PAVYMVQTRQ (168 aa)). 2 residues coordinate substrate: W51 and D154. Position 159 (N159) interacts with acetyl-CoA.

As to quaternary structure, homodimer.

The enzyme catalyses kanamycin B + acetyl-CoA = N(6')-acetylkanamycin B + CoA + H(+). Catalyzes the transfer of an acetyl group from acetyl-CoA to the 6'-amino group of aminoglycoside molecules conferring resistance to antibiotics containing the purpurosamine ring including amikacin and kanamycin. In Serratia marcescens, this protein is Aminoglycoside N(6')-acetyltransferase type 1 (aacA4).